The chain runs to 88 residues: Small ribosomal subunit protein bS16 (88 aa).

It belongs to the bacterial ribosomal protein bS16 family.

This Mesomycoplasma hyopneumoniae (strain 232) (Mycoplasma hyopneumoniae) protein is Small ribosomal subunit protein bS16.